Here is a 355-residue protein sequence, read N- to C-terminus: Protein RecA (355 aa).

Position 65-72 (65-72 (GPESSGKT)) interacts with ATP.

Belongs to the RecA family.

The protein resides in the cytoplasm. Its function is as follows. Can catalyze the hydrolysis of ATP in the presence of single-stranded DNA, the ATP-dependent uptake of single-stranded DNA by duplex DNA, and the ATP-dependent hybridization of homologous single-stranded DNAs. It interacts with LexA causing its activation and leading to its autocatalytic cleavage. The sequence is that of Protein RecA from Pseudomonas putida (strain W619).